The sequence spans 211 residues: Mitotic spindle assembly checkpoint protein MAD2B (211 aa).

The HORMA domain occupies 13–203 (QVVADILCEF…SDILKMQLYV (191 aa)).

Homooligomer. Interacts with rev1. Interacts with rev3l. Interacts with fzr1 (in complex with the anaphase promoting complex APC). May interact with cdc20.

The protein resides in the nucleus. It is found in the cytoplasm. It localises to the cytoskeleton. Its subcellular location is the spindle. In terms of biological role, adapter protein able to interact with different proteins and involved in different biological processes. Mediates the interaction between the error-prone DNA polymerase zeta catalytic subunit rev3l and the inserter polymerase rev1, thereby mediating the second polymerase switching in translesion DNA synthesis. Translesion DNA synthesis releases the replication blockade of replicative polymerases, stalled in presence of DNA lesions. May also play a role in signal transduction in response to DNA damage. May regulate the activation of the anaphase promoting complex APC thereby regulating progression through the cell cycle. Through transcriptional regulation may play a role in epithelial-mesenchymal transdifferentiation. In Danio rerio (Zebrafish), this protein is Mitotic spindle assembly checkpoint protein MAD2B (mad2l2).